Here is a 388-residue protein sequence, read N- to C-terminus: Lipoyl synthase, mitochondrial (388 aa).

Residues 1 to 18 (MRLTTVQRRFLVSTKAKV) constitute a mitochondrion transit peptide. Over residues 22 to 39 (SISSTANTGSASAGAPNG) the composition is skewed to low complexity. Positions 22–43 (SISSTANTGSASAGAPNGQTRR) are disordered. 7 residues coordinate [4Fe-4S] cluster: Cys120, Cys125, Cys131, Cys151, Cys155, Cys158, and Ser366. One can recognise a Radical SAM core domain in the interval 134–355 (GKDKSKATAT…KDKAKEMGFL (222 aa)).

Belongs to the radical SAM superfamily. Lipoyl synthase family. [4Fe-4S] cluster serves as cofactor.

It localises to the mitochondrion. The enzyme catalyses [[Fe-S] cluster scaffold protein carrying a second [4Fe-4S](2+) cluster] + N(6)-octanoyl-L-lysyl-[protein] + 2 oxidized [2Fe-2S]-[ferredoxin] + 2 S-adenosyl-L-methionine + 4 H(+) = [[Fe-S] cluster scaffold protein] + N(6)-[(R)-dihydrolipoyl]-L-lysyl-[protein] + 4 Fe(3+) + 2 hydrogen sulfide + 2 5'-deoxyadenosine + 2 L-methionine + 2 reduced [2Fe-2S]-[ferredoxin]. Its pathway is protein modification; protein lipoylation via endogenous pathway; protein N(6)-(lipoyl)lysine from octanoyl-[acyl-carrier-protein]: step 2/2. In terms of biological role, catalyzes the radical-mediated insertion of two sulfur atoms into the C-6 and C-8 positions of the octanoyl moiety bound to the lipoyl domains of lipoate-dependent enzymes, thereby converting the octanoylated domains into lipoylated derivatives. The sequence is that of Lipoyl synthase, mitochondrial from Candida glabrata (strain ATCC 2001 / BCRC 20586 / JCM 3761 / NBRC 0622 / NRRL Y-65 / CBS 138) (Yeast).